Consider the following 88-residue polypeptide: Apolipoprotein C-I (88 aa).

A signal peptide spans 1-26 (MRLFIALPVLIVVVAMTLEGPAPAQA).

Belongs to the apolipoprotein C1 family. In terms of tissue distribution, adult and fetal liver.

It localises to the secreted. Inhibitor of lipoprotein binding to the low density lipoprotein (LDL) receptor, LDL receptor-related protein, and very low density lipoprotein (VLDL) receptor. Associates with high density lipoproteins (HDL) and the triacylglycerol-rich lipoproteins in the plasma and makes up about 10% of the protein of the VLDL and 2% of that of HDL. Appears to interfere directly with fatty acid uptake and is also the major plasma inhibitor of cholesteryl ester transfer protein (CETP). Modulates the interaction of APOE with beta-migrating VLDL and inhibits binding of beta-VLDL to the LDL receptor-related protein. Binds free fatty acids and reduces their intracellular esterification. This Mus musculus (Mouse) protein is Apolipoprotein C-I (Apoc1).